Consider the following 490-residue polypeptide: Cobyric acid synthase (490 aa).

Residues 252–439 (RLKVVVPVLP…LHGLFESTAA (188 aa)) enclose the GATase cobBQ-type domain. C333 serves as the catalytic Nucleophile. H431 is an active-site residue.

It belongs to the CobB/CobQ family. CobQ subfamily.

The protein operates within cofactor biosynthesis; adenosylcobalamin biosynthesis. Functionally, catalyzes amidations at positions B, D, E, and G on adenosylcobyrinic A,C-diamide. NH(2) groups are provided by glutamine, and one molecule of ATP is hydrogenolyzed for each amidation. The chain is Cobyric acid synthase from Pseudomonas aeruginosa (strain ATCC 15692 / DSM 22644 / CIP 104116 / JCM 14847 / LMG 12228 / 1C / PRS 101 / PAO1).